We begin with the raw amino-acid sequence, 426 residues long: Histidine--tRNA ligase 1 (426 aa).

Belongs to the class-II aminoacyl-tRNA synthetase family. As to quaternary structure, homodimer.

The protein localises to the cytoplasm. The catalysed reaction is tRNA(His) + L-histidine + ATP = L-histidyl-tRNA(His) + AMP + diphosphate + H(+). The protein is Histidine--tRNA ligase 1 of Shouchella clausii (strain KSM-K16) (Alkalihalobacillus clausii).